Consider the following 547-residue polypeptide: MPAKEIAFHQGAREAILRGVQTLAEAVAVTLGPKGRNVVIEKSFGSPTITKDGVTVAKEIEVENKFENMGAQMVREVASQTSDKAGDGTTTATVLARALFEEGLKLVAAGHNPMDLKRGIDRAVEVIVAELKKLSKPTQGKKDIAQVGTISANGDETIGNIIAEAMEKVGKEGVITVEEAKGLETTLDVVEGMQFDRGYSSPYFVTNPDRMEAVLEDPFILITEKKISAMADLIPVLEQVARSGKPLLIVAEDVEGEALATLVVNKLRGTLHVCAVKAPGFGDRRKEMLKDIATLTGGNVVAEELGIKLEQLTVKDLGRAKRITIDKENTTIVDGEGKREDIEARIKQIRAQIEETTSDYDREKLQERLAKLVGGVAVINVGAATETEMKEKKARVEDALHATRAAVEEGIVPGGGVAYLRALQALKKLEVPEGDQRFGVAIVQKALEYPARRIAENAGWDGAVVVSRINDGKAAHGFNAASEVFEDLEKAGVIDPTKVSRTALQNAASVASLLLTTEAMVAEKPKKKGAPAGGGMGGMGGMDEMDY.

Residues 30–33 (TLGP), lysine 51, 87–91 (DGTTT), glycine 415, 479–481 (NAA), and aspartate 495 contribute to the ATP site. The segment at 525-547 (PKKKGAPAGGGMGGMGGMDEMDY) is disordered. A compositionally biased stretch (gly residues) spans 531–541 (PAGGGMGGMGG).

It belongs to the chaperonin (HSP60) family. As to quaternary structure, forms a cylinder of 14 subunits composed of two heptameric rings stacked back-to-back. Interacts with the co-chaperonin GroES.

It is found in the cytoplasm. It catalyses the reaction ATP + H2O + a folded polypeptide = ADP + phosphate + an unfolded polypeptide.. Functionally, together with its co-chaperonin GroES, plays an essential role in assisting protein folding. The GroEL-GroES system forms a nano-cage that allows encapsulation of the non-native substrate proteins and provides a physical environment optimized to promote and accelerate protein folding. This chain is Chaperonin GroEL 1, found in Anaeromyxobacter sp. (strain Fw109-5).